Reading from the N-terminus, the 512-residue chain is Perphorin-1 (512 aa).

An N-terminal signal peptide occupies residues 1 to 18; sequence MMRKALLALCVATAFAVA. N49, N96, N118, N378, N381, N403, and N476 each carry an N-linked (GlcNAc...) asparagine glycan.

The protein resides in the secreted. Its subcellular location is the extracellular space. It localises to the extracellular matrix. In terms of biological role, may be involved in conversion of asexual males and females to the sexual pathway. The protein is Perphorin-1 of Volvox carteri (Green alga).